Reading from the N-terminus, the 114-residue chain is Large ribosomal subunit protein eL30 (114 aa).

The protein belongs to the eukaryotic ribosomal protein eL30 family.

This chain is Large ribosomal subunit protein eL30 (RPL30), found in Branchiostoma belcheri (Amphioxus).